The primary structure comprises 229 residues: Non-structural protein P8 (229 aa).

A run of 2 helical transmembrane segments spans residues I119 to L139 and S162 to A182.

This sequence belongs to the orbivirus NS3 family. As to quaternary structure, forms homooligomers via coiled-coil motif. Interacts with host OPTN; this interaction inhibits innate immune response.

The protein localises to the host cell membrane. It is found in the host Golgi apparatus. Its function is as follows. Plays a role in the inhibition of host innate immune response. Interacts with host OPTN and thus inhibits the recruitment of TBK1 to the host Golgi apparatus. In turn, downstream partner IRF3 cannot be activated and IFN-beta production is impaired. Functionally, facilitates viral particle release either by increasing plasma membrane permeability through a viroporin-like activity or by viral budding. This chain is Non-structural protein P8 (Segment-10), found in Antilocapra americana (Pronghorn).